We begin with the raw amino-acid sequence, 123 residues long: Plasminogen (123 aa).

A Kringle domain is found at 40–118 (DCYHGNGQSY…RWEFCNLKKC (79 aa)). 3 cysteine pairs are disulfide-bonded: Cys41–Cys118, Cys62–Cys101, and Cys90–Cys113.

The protein belongs to the peptidase S1 family. Plasminogen subfamily. Interacts with CSPG4 and AMOT. Interacts (via the Kringle domains) with HRG; the interaction tethers PLG to the cell surface and enhances its activation. Interacts (via Kringle 4 domain) with ADA; the interaction stimulates PLG activation when in complex with DPP4. Angiostatin: Interacts with ATP5F1A; the interaction inhibits most of the angiogenic effects of angiostatin.

The protein localises to the secreted. The catalysed reaction is Preferential cleavage: Lys-|-Xaa &gt; Arg-|-Xaa, higher selectivity than trypsin. Converts fibrin into soluble products.. Converted into plasmin by plasminogen activators, both plasminogen and its activator being bound to fibrin. Cannot be activated with streptokinase. Its function is as follows. Plasmin dissolves the fibrin of blood clots and acts as a proteolytic factor in a variety of other processes including embryonic development, tissue remodeling, tumor invasion, and inflammation. In ovulation, weakens the walls of the Graafian follicle. It activates the urokinase-type plasminogen activator, collagenases and several complement zymogens, such as C1, C4 and C5. Cleavage of fibronectin and laminin leads to cell detachment and apoptosis. Also cleaves fibrin, thrombospondin and von Willebrand factor. Its role in tissue remodeling and tumor invasion may be modulated by CSPG4. Binds to cells. The protein is Plasminogen (PLG) of Capra hircus (Goat).